A 243-amino-acid chain; its full sequence is Transcription factor TFIIS homolog (243 aa).

In terms of domain architecture, TFIIS central spans 77–201 (MRDIIQMMFF…SQQKVAEKTS (125 aa)). Residues 202 to 242 (QLYKCPNCKQRMCTYREVQTRALDEPSTIFCTCKKCGHEFI) form a TFIIS-type zinc finger. Positions 206, 209, 234, and 237 each coordinate Zn(2+).

It belongs to the TFS-II family.

Functionally, putative initiation factor. Necessary for efficient transcription elongation past template-encoded arresting sites. In Ornithodoros (relapsing fever ticks), this protein is Transcription factor TFIIS homolog.